We begin with the raw amino-acid sequence, 1362 residues long: ATP-dependent RNA helicase dhx29 (1362 aa).

Positions 1–10 are enriched in basic residues; the sequence is MGGKNKKNRH. Residues 1 to 76 form a disordered region; sequence MGGKNKKNRH…FASSSDSGVS (76 aa). The span at 18–27 shows a compositional bias: low complexity; the sequence is GATAAANRPR. Residues 28–41 are compositionally biased toward basic and acidic residues; sequence AAAEPRPGGEDAAK. Low complexity predominate over residues 66–76; sequence SFASSSDSGVS. Positions 89-109 form a coiled coil; the sequence is EAKLEKRIISLINEHKKLNSN. Disordered stretches follow at residues 182–215 and 229–257; these read QRARAKFQAPPQRPSAANESATEKGEEGASLKGN and EQGSDDDDDDDDVKEEEKETTLEKFDPNE. Acidic residues predominate over residues 231–242; it reads GSDDDDDDDDVK. Residues 243-257 show a composition bias toward basic and acidic residues; the sequence is EEEKETTLEKFDPNE. Residues 285–305 are a coiled coil; the sequence is QKEAQERIRGYQQEMKSLEDH. The disordered stretch occupies residues 317 to 336; it reads VKSESKQPKPALPPSEDEPL. A Helicase ATP-binding domain is found at 576–749; the sequence is LETLKRHRVI…FTHCPIIRIS (174 aa). Residue 589-596 participates in ATP binding; sequence GETGSGKS. Positions 696-699 match the DEAH box motif; the sequence is DEVH. Residues 852-1021 enclose the Helicase C-terminal domain; the sequence is DISPEYRNVE…ELCLHIMKCD (170 aa).

Belongs to the DEAD box helicase family. DEAH subfamily. Part of the 43S pre-initiation complex (PIC).

It is found in the cytoplasm. It carries out the reaction ATP + H2O = ADP + phosphate + H(+). In terms of biological role, ATP-binding RNA helicase involved in translation initiation. Part of the 43S pre-initiation complex that is required for efficient initiation on mRNAs of higher eukaryotes with structured 5'-UTRs by promoting efficient NTPase-dependent 48S complex formation. Specifically binds to the 40S ribosome near the mRNA entrance. Does not possess a processive helicase activity. This chain is ATP-dependent RNA helicase dhx29, found in Xenopus laevis (African clawed frog).